The sequence spans 630 residues: Differentially expressed in FDCP 6 (630 aa).

Tyrosine 210 is modified (phosphotyrosine). Residues 216-312 enclose the PH domain; it reads DVLKQGYLWK…WTAAIQTAIR (97 aa). An N6-acetyllysine modification is found at lysine 225. Disordered regions lie at residues 318 to 341, 378 to 418, and 552 to 630; these read KTSL…RRRA, LQEE…ELKK, and HPIE…APGN. 2 stretches are compositionally biased toward basic and acidic residues: residues 331-341 and 378-392; these read EQREQRERRRA and LQEE…HKEL. The span at 588-606 shows a compositional bias: polar residues; sequence WGSQGNRTLSVNSSEQKSL. Serine 590 is modified (phosphoserine). The segment covering 620 to 630 has biased composition (basic and acidic residues); the sequence is QEEKLDPAPGN.

Interacts with IRF4, activated RAC1 and F-actin. Both the phosphorylated and non-phosphorylated forms bind phosphatidylinositol 3,4,5-trisphosphate (PtdInsP3). Interacts with ZAP70. Interacts with RAB11A. In terms of processing, tyrosine-phosphorylated by tyrosine-protein kinase LCK in response to T-cell activation. Thymus.

Its subcellular location is the cytoplasm. It localises to the cell membrane. The protein resides in the nucleus. The protein localises to the cytoskeleton. It is found in the perinuclear region. Its subcellular location is the cell projection. It localises to the filopodium. Phosphatidylinositol 3,4,5-trisphosphate-dependent guanine nucleotide exchange factor (GEF) which plays a role in the activation of Rho GTPases RAC1, RhoA and CDC42. Can regulate cell morphology in cooperation with activated RAC1. Involved in immune homeostasis by ensuring proper trafficking and availability of T-cell regulator CTLA-4 at T-cell surface. Plays a role in Th2 (T helper cells) development and/or activation, perhaps by interfering with ZAP70 signaling. Required for optimal T-cell effector function, lymphocyte homeostasis and the prevention of systemic autoimmunity. The sequence is that of Differentially expressed in FDCP 6 (Def6) from Mus musculus (Mouse).